Reading from the N-terminus, the 350-residue chain is Hydroxymethylglutaryl-CoA synthase (350 aa).

Positions 33 and 34 each coordinate (3S)-3-hydroxy-3-methylglutaryl-CoA. Residue E85 is the Proton donor/acceptor of the active site. Positions 117 and 158 each coordinate (3S)-3-hydroxy-3-methylglutaryl-CoA. The Acyl-thioester intermediate role is filled by C117. Residue R204 participates in CoA binding. The (3S)-3-hydroxy-3-methylglutaryl-CoA site is built by T206 and H239. H239 functions as the Proton donor/acceptor in the catalytic mechanism. K244 contributes to the CoA binding site. (3S)-3-hydroxy-3-methylglutaryl-CoA-binding residues include K248, N271, and S301.

Belongs to the thiolase-like superfamily. Archaeal HMG-CoA synthase family. Interacts with acetoacetyl-CoA thiolase that catalyzes the precedent step in the pathway and with a DUF35 protein. The acetoacetyl-CoA thiolase/HMG-CoA synthase complex channels the intermediate via a fused CoA-binding site, which allows for efficient coupling of the endergonic thiolase reaction with the exergonic HMGCS reaction.

The catalysed reaction is acetoacetyl-CoA + acetyl-CoA + H2O = (3S)-3-hydroxy-3-methylglutaryl-CoA + CoA + H(+). Its pathway is metabolic intermediate biosynthesis; (R)-mevalonate biosynthesis; (R)-mevalonate from acetyl-CoA: step 2/3. Functionally, catalyzes the condensation of acetyl-CoA with acetoacetyl-CoA to form 3-hydroxy-3-methylglutaryl-CoA (HMG-CoA). Functions in the mevalonate (MVA) pathway leading to isopentenyl diphosphate (IPP), a key precursor for the biosynthesis of isoprenoid compounds that are building blocks of archaeal membrane lipids. The sequence is that of Hydroxymethylglutaryl-CoA synthase from Methanopyrus kandleri (strain AV19 / DSM 6324 / JCM 9639 / NBRC 100938).